Here is a 249-residue protein sequence, read N- to C-terminus: MKKSIIIPALDLIEGQVVRLYQGDYAQQTLYSDNPIAQFQCYVDQGAQQLHLVDLTGAKDPVKRQTELIGKIIEATKCKIQVGGGIRTEQDVADLLAVGANRVVIGSTAVKRPEMVKGWFEKYGAEKFVLALDVNIDASGQKIIAVSGWQEASGVSLEELIEDYQSVGLQHVLCTDISRDGTLAGSNVNLYKEICTKYPEIQFQSSGGIGSLADIAALKGLGVAGVIVGRALLEGKFNVAEAIECWQNG.

D11 serves as the catalytic Proton acceptor. The active-site Proton donor is the D133.

The protein belongs to the HisA/HisF family.

It is found in the cytoplasm. The enzyme catalyses 1-(5-phospho-beta-D-ribosyl)-5-[(5-phospho-beta-D-ribosylamino)methylideneamino]imidazole-4-carboxamide = 5-[(5-phospho-1-deoxy-D-ribulos-1-ylimino)methylamino]-1-(5-phospho-beta-D-ribosyl)imidazole-4-carboxamide. The protein operates within amino-acid biosynthesis; L-histidine biosynthesis; L-histidine from 5-phospho-alpha-D-ribose 1-diphosphate: step 4/9. This is 1-(5-phosphoribosyl)-5-[(5-phosphoribosylamino)methylideneamino] imidazole-4-carboxamide isomerase from Actinobacillus succinogenes (strain ATCC 55618 / DSM 22257 / CCUG 43843 / 130Z).